Consider the following 257-residue polypeptide: Imidazole glycerol phosphate synthase subunit HisF (257 aa).

Residues Asp11 and Asp130 contribute to the active site.

The protein belongs to the HisA/HisF family. In terms of assembly, heterodimer of HisH and HisF.

It is found in the cytoplasm. The enzyme catalyses 5-[(5-phospho-1-deoxy-D-ribulos-1-ylimino)methylamino]-1-(5-phospho-beta-D-ribosyl)imidazole-4-carboxamide + L-glutamine = D-erythro-1-(imidazol-4-yl)glycerol 3-phosphate + 5-amino-1-(5-phospho-beta-D-ribosyl)imidazole-4-carboxamide + L-glutamate + H(+). Its pathway is amino-acid biosynthesis; L-histidine biosynthesis; L-histidine from 5-phospho-alpha-D-ribose 1-diphosphate: step 5/9. Its function is as follows. IGPS catalyzes the conversion of PRFAR and glutamine to IGP, AICAR and glutamate. The HisF subunit catalyzes the cyclization activity that produces IGP and AICAR from PRFAR using the ammonia provided by the HisH subunit. The sequence is that of Imidazole glycerol phosphate synthase subunit HisF from Shewanella sp. (strain ANA-3).